The following is a 300-amino-acid chain: Regulatory protein NocR (300 aa).

Residues Met-1–Thr-59 form the HTH lysR-type domain. Residues Met-19–Arg-38 constitute a DNA-binding region (H-T-H motif).

This sequence belongs to the LysR transcriptional regulatory family.

Functionally, positive regulatory protein for the noc operon involved in nopaline catabolism and uptake. In Agrobacterium fabrum (strain C58 / ATCC 33970) (Agrobacterium tumefaciens (strain C58)), this protein is Regulatory protein NocR (nocR).